A 94-amino-acid polypeptide reads, in one-letter code: Alpha-conotoxin Cp20.3 (94 aa).

A signal peptide spans 1 to 24 (MPKLAVVLLVLLILPLSYFDAAGG). The propeptide occupies 25–45 (QAVQGDRRGNGLARYLQRGDR). E46 is modified (4-carboxyglutamate; partial). At E49 the chain carries 4-carboxyglutamate. Position 55 is a 4-hydroxyproline (P55). Cystine bridges form between C63-C72, C68-C80, C73-C90, and C78-C92.

This sequence belongs to the conotoxin D superfamily. Hetero-, homo- or pseudo-homodimer (identical sequence, different post-translational modifications). Expressed by the venom duct.

It is found in the secreted. In terms of biological role, alpha-D-conopeptides act on postsynaptic membranes, they bind to the nicotinic acetylcholine receptors (nAChR) and thus inhibit them. Through its two C-terminal domains, this homodimeric protein would bind to two nAChR allosteric sites, located outside the nAChR C-loop of the principal binding face and at the adjacent binding interface in a clockwise direction. This toxin specifically blocks mammalian neuronal nAChR of the alpha-7/CHRNA7 (IC(50)=0.25 nM), alpha-3-beta-2/CHRNA3-CHRNB2 (IC(50)=2.8 nM), and alpha-4-beta-2/CHRNA4-CHRNB2 (IC(50)=28.6 nM) subtypes. Has no effect on alpha-3-beta-4/CHRNA3-CHRNB4, alpha-4-beta-4/CHRNA4-CHRNB4 and alpha-1-beta-1-epsilon-delta/CHRNA1-CHRNB1-CHRNE-CHRND subtypes of nAChRs. The sequence is that of Alpha-conotoxin Cp20.3 from Conus capitaneus (Captain cone).